The following is a 647-amino-acid chain: Sodium/nucleoside cotransporter 1 (647 aa).

The Cytoplasmic portion of the chain corresponds to 1-79 (MEDNTPRQRD…VRRFCREHTQ (79 aa)). The interval 34–58 (EGRAPGSDSSPAEVGGGWSKAGPEH) is disordered. Residues 80 to 103 (LFRWICTGLLCTAFAAFLLIACLL) traverse the membrane as a helical segment. Residues 104-108 (DFQRA) lie on the Extracellular side of the membrane. Residues 109–127 (LALFVLFCVVLFFLAHSLL) form a helical membrane-spanning segment. Residues 128-146 (KRLLGPKLLRCVKPLRHPC) are Cytoplasmic-facing. Residues 147–166 (LNLWFKRGLALAAFLGLVLW) form a helical membrane-spanning segment. The Extracellular portion of the chain corresponds to 167-177 (LVLDTAQRPEQ). Residues 178–194 (LVSFGGICVFILLLFAG) form a helical membrane-spanning segment. Residues 195-200 (SKHHRA) lie on the Cytoplasmic side of the membrane. A helical transmembrane segment spans residues 201–221 (VSWRAVSWGLGLQFALGLFVI). The Extracellular segment spans residues 222–260 (RTEPGFIAFQWLGDQIQIFLSYTEAGSSFVFGEALVKDV). A helical transmembrane segment spans residues 261-282 (FAFQVLPIIVFFSCAMSVLYYV). Residues 283 to 293 (GLMQWVILKIS) are Cytoplasmic-facing. A helical membrane pass occupies residues 294–317 (WLMQATMGTTATETLSVAGNIFVS). Residues 318–336 (QTEAPLLIRPYLADMTLSE) are Extracellular-facing. Residues 337–359 (IHVVMTGGYATIAGSLLGAYISF) form a helical membrane-spanning segment. Topologically, residues 360 to 365 (GIDAAS) are cytoplasmic. Residues 366–385 (LIAASVMAAPCALALSKLVY) traverse the membrane as a helical segment. At 386–422 (PEVEESKFKREEGVKLTYGDAQNLLEAASSGAAMSVR) the chain is on the extracellular side. A helical membrane pass occupies residues 423–445 (VVTNIAANLIAFLAVLAFINAAL). The Cytoplasmic portion of the chain corresponds to 446-456 (SWLGDMVDVQG). The chain crosses the membrane as a helical span at residues 457–478 (LSFQLICSYVLRPVAFLMGVAW). Residues 479 to 533 (EDCPVVAELLGMKLFLNEFVAYQELSGYKQRRLAGAEEWVGSRKQWISVRAEILT) are Extracellular-facing. Residues 534 to 557 (TYALCGFANFSSIGIMLGGLTSMV) form a helical membrane-spanning segment. The Cytoplasmic segment spans residues 558-568 (PQRKGDFSQIV). The chain crosses the membrane as a helical span at residues 569–591 (LRALCTGACVSLVNACVAGILYV). Residues 592–647 (PRGAEVDCVSFLNTTLSSSSFEVYQCCRQFFQSTSLEFSPEALDNCCRFYNHTICV) are Extracellular-facing. 2 N-linked (GlcNAc...) asparagine glycosylation sites follow: asparagine 604 and asparagine 642.

It belongs to the concentrative nucleoside transporter (CNT) (TC 2.A.41) family. In terms of processing, N-glycosylated. N-glycosylation is required for localization to the plasma membrane and the transporter activity.

It localises to the cell membrane. The protein resides in the apical cell membrane. It catalyses the reaction uridine(out) + Na(+)(out) = uridine(in) + Na(+)(in). The enzyme catalyses thymidine(out) + Na(+)(out) = thymidine(in) + Na(+)(in). It carries out the reaction cytidine(out) + Na(+)(out) = cytidine(in) + Na(+)(in). The catalysed reaction is adenosine(out) + Na(+)(out) = adenosine(in) + Na(+)(in). With respect to regulation, due to its high apparent affinity but slow transport, adenosine could act as a negative regulator of pyrimidine transport under some conditions. Sodium and pyrimidine nucleoside symporter of the plasma membrane that imports uridine, thymidine and cytidine into cells by coupling their transport to the transmembrane sodium electrochemical gradient. Also transports adenosine, an atypical substrate transported with high apparent affinity, but low maximum velocity. Therefore, exhibits the transport characteristics of the nucleoside transport system cit or N2 subtype (N2/cit). Involved in renal nucleoside (re)absorption. This is Sodium/nucleoside cotransporter 1 (SLC28A1) from Sus scrofa (Pig).